We begin with the raw amino-acid sequence, 95 residues long: uncharacterized protein (95 aa).

A disordered region spans residues 46 to 68; it reads GDRGTNGRTEAEHDGIPHSRKKV.

This is an uncharacterized protein from Schizosaccharomyces pombe (strain 972 / ATCC 24843) (Fission yeast).